A 773-amino-acid chain; its full sequence is Polymeric immunoglobulin receptor (773 aa).

The N-terminal stretch at 1 to 18 (MALFLLTCLLAVFSAATA) is a signal peptide. Topologically, residues 19-647 (QSSLLGPSSI…SASGQSGSAK (629 aa)) are extracellular. Residues 25 to 131 (PSSIFGPGEV…RGLDFGVNVL (107 aa)) enclose the Ig-like V-type 1; required for binding to polymeric IgA and IgM domain. Intrachain disulfides connect Cys46-Cys115, Cys155-Cys225, Cys260-Cys324, Cys369-Cys438, and Cys478-Cys538. Lys88 carries an N-linked (GlcNAc...) asparagine; in variant N-88 glycan. N-linked (GlcNAc...) asparagine glycosylation is present at Asn108. Ig-like V-type domains follow at residues 138 to 232 (PDDV…SDPT), 233 to 340 (AEEQ…TQLR), 352 to 455 (RSPP…LQIV), and 461 to 557 (PTID…VELT). Asn418 carries an N-linked (GlcNAc...) asparagine glycan. The disordered stretch occupies residues 619-641 (AVQSAEDPASGSRASVDASSASG). Positions 632 to 641 (ASVDASSASG) are enriched in low complexity. A helical transmembrane segment spans residues 648-670 (VLISTLVPLGLVLAAGAMAVAIA). The Cytoplasmic segment spans residues 671 to 773 (RARHRRNVDR…AEHQDGPKEA (103 aa)). Ser682, Ser691, Ser698, and Ser744 each carry phosphoserine. A disordered region spans residues 725–746 (ATATESTVEIEEPKKAKRSSKE). Basic and acidic residues predominate over residues 735 to 746 (EEPKKAKRSSKE).

In terms of assembly, interacts (mainly via CDR1-like domain) with dimeric IgA. Interacts (mainly via CDR2-like domain) with pentameric IgM. Either free or part of the secretory IgA (sIgA) complex that consists of two, four or five IgA monomers, and two additional non-Ig polypeptides, namely the JCHAIN and the secretory component (the proteolytic product of PIGR). Free secretory component interacts with bacterial antigens toxA of C.difficile and eae of E.coli. N-glycosylated. N-glycosylation is required for anchoring IgA molecules to mucus, but is not necessary for Ig binding.

Its subcellular location is the cell membrane. It localises to the secreted. Mediates selective transcytosis of polymeric IgA and IgM across mucosal epithelial cells. Binds polymeric IgA and IgM at the basolateral surface of epithelial cells. The complex is then transported across the cell to be secreted at the apical surface. During this process, a cleavage occurs that separates the extracellular (known as the secretory component) from the transmembrane segment. Its function is as follows. Through its N-linked glycans ensures anchoring of secretory IgA (sIgA) molecules to mucus lining the epithelial surface to neutralize extracellular pathogens. On its own (free form) may act as a non-specific microbial scavenger to prevent pathogen interaction with epithelial cells. This Oryctolagus cuniculus (Rabbit) protein is Polymeric immunoglobulin receptor (PIGR).